The primary structure comprises 420 residues: Histidine--tRNA ligase (420 aa).

Belongs to the class-II aminoacyl-tRNA synthetase family. As to quaternary structure, homodimer.

It localises to the cytoplasm. It carries out the reaction tRNA(His) + L-histidine + ATP = L-histidyl-tRNA(His) + AMP + diphosphate + H(+). This Mycoplasmopsis pulmonis (strain UAB CTIP) (Mycoplasma pulmonis) protein is Histidine--tRNA ligase (hisS).